Reading from the N-terminus, the 640-residue chain is Endoglucanase 2 (640 aa).

A signal peptide spans 1 to 34; it reads MARGGGAAGVSMAHHLGIALVVLVFAAMAQVARG. Residue Asp-93 is the Nucleophile of the active site. Active-site residues include His-428, Asp-480, and Glu-489. The propeptide at 512–640 is removed in mature form; the sequence is RARGRLGQSL…DVWVTGYKLV (129 aa). N-linked (GlcNAc...) asparagine glycosylation is present at Asn-528.

Belongs to the glycosyl hydrolase 9 (cellulase E) family. In terms of tissue distribution, expressed in roots and flowers.

Its subcellular location is the secreted. It carries out the reaction Endohydrolysis of (1-&gt;4)-beta-D-glucosidic linkages in cellulose, lichenin and cereal beta-D-glucans.. In terms of biological role, hydrolyzes 1,4-beta-glycosyl linkages of 1,4-beta-glucans and 1,3-1,4-beta-glucans. Possesses broad substrate specificity for hemicelluloses of type II cell walls. Substrate preference is carboxymethyl-cellulose &gt; 1,3-1,4-beta-glucan &gt; lichenan &gt; arabinoxylan &gt; phospho-swollen cellulose &gt; xylan &gt; glucomannan. May participate in lateral root development. This chain is Endoglucanase 2 (GLU5), found in Oryza sativa subsp. japonica (Rice).